Reading from the N-terminus, the 306-residue chain is Aspartate carbamoyltransferase catalytic subunit (306 aa).

Positions 56 and 57 each coordinate carbamoyl phosphate. Position 84 (Lys-84) interacts with L-aspartate. Residues Arg-106, His-136, and Gln-139 each coordinate carbamoyl phosphate. Positions 169 and 221 each coordinate L-aspartate. Ala-262 and Pro-263 together coordinate carbamoyl phosphate.

It belongs to the aspartate/ornithine carbamoyltransferase superfamily. ATCase family. In terms of assembly, heterododecamer (2C3:3R2) of six catalytic PyrB chains organized as two trimers (C3), and six regulatory PyrI chains organized as three dimers (R2).

The catalysed reaction is carbamoyl phosphate + L-aspartate = N-carbamoyl-L-aspartate + phosphate + H(+). It participates in pyrimidine metabolism; UMP biosynthesis via de novo pathway; (S)-dihydroorotate from bicarbonate: step 2/3. Its function is as follows. Catalyzes the condensation of carbamoyl phosphate and aspartate to form carbamoyl aspartate and inorganic phosphate, the committed step in the de novo pyrimidine nucleotide biosynthesis pathway. The protein is Aspartate carbamoyltransferase catalytic subunit of Streptococcus gordonii (strain Challis / ATCC 35105 / BCRC 15272 / CH1 / DL1 / V288).